We begin with the raw amino-acid sequence, 473 residues long: UDP-N-acetylmuramate--L-alanine ligase (473 aa).

Residue G119–T125 coordinates ATP.

The protein belongs to the MurCDEF family.

The protein resides in the cytoplasm. The enzyme catalyses UDP-N-acetyl-alpha-D-muramate + L-alanine + ATP = UDP-N-acetyl-alpha-D-muramoyl-L-alanine + ADP + phosphate + H(+). Its pathway is cell wall biogenesis; peptidoglycan biosynthesis. Its function is as follows. Cell wall formation. The chain is UDP-N-acetylmuramate--L-alanine ligase from Caulobacter vibrioides (strain NA1000 / CB15N) (Caulobacter crescentus).